Reading from the N-terminus, the 243-residue chain is 3-deoxy-manno-octulosonate cytidylyltransferase (243 aa).

It belongs to the KdsB family.

The protein resides in the cytoplasm. It catalyses the reaction 3-deoxy-alpha-D-manno-oct-2-ulosonate + CTP = CMP-3-deoxy-beta-D-manno-octulosonate + diphosphate. The protein operates within nucleotide-sugar biosynthesis; CMP-3-deoxy-D-manno-octulosonate biosynthesis; CMP-3-deoxy-D-manno-octulosonate from 3-deoxy-D-manno-octulosonate and CTP: step 1/1. It participates in bacterial outer membrane biogenesis; lipopolysaccharide biosynthesis. Activates KDO (a required 8-carbon sugar) for incorporation into bacterial lipopolysaccharide in Gram-negative bacteria. This Helicobacter pylori (strain J99 / ATCC 700824) (Campylobacter pylori J99) protein is 3-deoxy-manno-octulosonate cytidylyltransferase.